The sequence spans 95 residues: Large ribosomal subunit protein bL21 (95 aa).

The protein belongs to the bacterial ribosomal protein bL21 family. In terms of assembly, part of the 50S ribosomal subunit. Contacts protein L20.

This protein binds to 23S rRNA in the presence of protein L20. The polypeptide is Large ribosomal subunit protein bL21 (Chlorobaculum tepidum (strain ATCC 49652 / DSM 12025 / NBRC 103806 / TLS) (Chlorobium tepidum)).